Reading from the N-terminus, the 242-residue chain is Glutamate transport ATP-binding protein GluA (242 aa).

Residues 2-236 enclose the ABC transporter domain; it reads IKMTGVQKYF…PKSDRAKDFL (235 aa). 34–41 contacts ATP; the sequence is GPSGSGKS.

This sequence belongs to the ABC transporter superfamily. As to quaternary structure, the complex is composed of two ATP-binding proteins (GluA), two transmembrane proteins (GluC and GluD) and a solute-binding protein (GluB).

The protein localises to the cell membrane. The catalysed reaction is a polar amino acid(out) + ATP + H2O = a polar amino acid(in) + ADP + phosphate + H(+). It catalyses the reaction L-glutamate(out) + ATP + H2O = L-glutamate(in) + ADP + phosphate + H(+). Functionally, part of the ABC transporter complex GluABCD involved in glutamate uptake. Probably responsible for energy coupling to the transport system. In Corynebacterium glutamicum (strain ATCC 13032 / DSM 20300 / JCM 1318 / BCRC 11384 / CCUG 27702 / LMG 3730 / NBRC 12168 / NCIMB 10025 / NRRL B-2784 / 534), this protein is Glutamate transport ATP-binding protein GluA.